We begin with the raw amino-acid sequence, 1431 residues long: Gag-Pol polyprotein (1431 aa).

Gly2 is lipidated: N-myristoyl glycine; by host. The interval 7–31 (ILRGGKLDAWERIKLKPGGKKHYMM) is interaction with Gp41. The segment at 8 to 43 (LRGGKLDAWERIKLKPGGKKHYMMKHLVWASRELER) is interaction with host CALM1. Positions 12 to 19 (KLDAWERI) are interaction with host AP3D1. An interaction with membrane phosphatidylinositol 4,5-bisphosphate and RNA region spans residues 14–33 (DAWERIKLKPGGKKHYMMKH). Residues 16–22 (WERIKLK) carry the Nuclear export signal motif. The Nuclear localization signal motif lies at 26 to 32 (KKHYMMK). The interval 73–77 (KELIS) is interaction with membrane phosphatidylinositol 4,5-bisphosphate. Residues 106–126 (EEQNKSQQKTQQAEAADKGKV) form a disordered region. Tyr130 bears the Phosphotyrosine; by host mark. The segment at 187 to 225 (NTVGGHQAAMQMLKDTINEEAAEWDRLHPVHAGPVAPGQ) is interaction with human PPIA/CYPA and NUP153. Residues 275–361 (YSPVSILDIK…GGPGHKARVL (87 aa)) form a dimerization/Multimerization of capsid protein p24 region. CCHC-type zinc fingers lie at residues 387–404 (IKCFNCGKEGHLARNCRA) and 408–425 (KGCWKCGKEGHQVKDCTE). Positions 437–461 (FPQGEARKSSSEQNRANSPTRRELQ) are disordered. The interval 485-489 (PQITL) is dimerization of protease. In terms of domain architecture, Peptidase A2 spans 504–573 (KEALLDTGAD…TPVNIIGRNM (70 aa)). Asp509 functions as the For protease activity; shared with dimeric partner in the catalytic mechanism. 2 dimerization of protease regions span residues 533–539 (GIGGFIK) and 572–584 (NMLTQLGCTLNFP). A Reverse transcriptase domain is found at 627-817 (EGKITKIGPE…PPFLWMGYEL (191 aa)). 3 residues coordinate Mg(2+): Asp693, Asp768, and Asp769. Residues 810 to 818 (FLWMGYELH) form an RT 'primer grip' region. The short motif at 981–997 (WEAWWTDYWQATWIPEW) is the Tryptophan repeat motif element. One can recognise an RNase H type-1 domain in the interval 1017–1140 (IAGAETFYVD…VDKLVSSGIR (124 aa)). Mg(2+) contacts are provided by Asp1026, Glu1061, Asp1081, and Asp1132. The Integrase-type zinc finger occupies 1146–1187 (DGINKAQEEHEKYHSNWRAMASEFNLPPIVAKEIVASCDKCQ). Residues His1155, His1159, Cys1183, and Cys1186 each contribute to the Zn(2+) site. In terms of domain architecture, Integrase catalytic spans 1197–1347 (VDCSPGIWQL…SAGERIIDII (151 aa)). Asp1207, Asp1259, and Glu1295 together coordinate Mg(2+). The integrase-type DNA-binding region spans 1366-1413 (FRVYYRDSRDPIWKGPAKLLWKGEGAVVLQDNSDIKVVPRRKVKIIKD).

In terms of assembly, homotrimer; further assembles as hexamers of trimers. Interacts with gp41 (via C-terminus). Interacts with host CALM1; this interaction induces a conformational change in the Matrix protein, triggering exposure of the myristate group. Interacts with host AP3D1; this interaction allows the polyprotein trafficking to multivesicular bodies during virus assembly. Part of the pre-integration complex (PIC) which is composed of viral genome, matrix protein, Vpr and integrase. Homodimer; the homodimer further multimerizes as homohexamers or homopentamers. Interacts with human PPIA/CYPA; This interaction stabilizes the capsid. Interacts with human NUP153. Interacts with host PDZD8; this interaction stabilizes the capsid. Interacts with monkey TRIM5; this interaction destabilizes the capsid. As to quaternary structure, homodimer, whose active site consists of two apposed aspartic acid residues. In terms of assembly, heterodimer of p66 RT and p51 RT (RT p66/p51). Heterodimerization of RT is essential for DNA polymerase activity. The overall folding of the subdomains is similar in p66 RT and p51 RT but the spatial arrangements of the subdomains are dramatically different. Homotetramer; may further associate as a homohexadecamer. Part of the pre-integration complex (PIC) which is composed of viral genome, matrix protein, Vpr and integrase. Interacts with human SMARCB1/INI1 and human PSIP1/LEDGF isoform 1. Interacts with human KPNA3; this interaction might play a role in nuclear import of the pre-integration complex. Interacts with human NUP153; this interaction might play a role in nuclear import of the pre-integration complex. Mg(2+) is required as a cofactor. Post-translationally, specific enzymatic cleavages by the viral protease yield mature proteins. The protease is released by autocatalytic cleavage. The polyprotein is cleaved during and after budding, this process is termed maturation. Proteolytic cleavage of p66 RT removes the RNase H domain to yield the p51 RT subunit. Nucleocapsid protein p7 might be further cleaved after virus entry. Tyrosine phosphorylated presumably in the virion by a host kinase. Phosphorylation is apparently not a major regulator of membrane association. In terms of processing, phosphorylated possibly by host MAPK1; this phosphorylation is necessary for Pin1-mediated virion uncoating. Post-translationally, methylated by host PRMT6, impairing its function by reducing RNA annealing and the initiation of reverse transcription.

The protein resides in the host cell membrane. The protein localises to the host endosome. It localises to the host multivesicular body. It is found in the virion membrane. Its subcellular location is the host nucleus. The protein resides in the host cytoplasm. The protein localises to the virion. The catalysed reaction is Specific for a P1 residue that is hydrophobic, and P1' variable, but often Pro.. The enzyme catalyses Endohydrolysis of RNA in RNA/DNA hybrids. Three different cleavage modes: 1. sequence-specific internal cleavage of RNA. Human immunodeficiency virus type 1 and Moloney murine leukemia virus enzymes prefer to cleave the RNA strand one nucleotide away from the RNA-DNA junction. 2. RNA 5'-end directed cleavage 13-19 nucleotides from the RNA end. 3. DNA 3'-end directed cleavage 15-20 nucleotides away from the primer terminus.. It carries out the reaction 3'-end directed exonucleolytic cleavage of viral RNA-DNA hybrid.. It catalyses the reaction DNA(n) + a 2'-deoxyribonucleoside 5'-triphosphate = DNA(n+1) + diphosphate. Its activity is regulated as follows. Protease: The viral protease is inhibited by many synthetic protease inhibitors (PIs), such as amprenavir, atazanavir, indinavir, loprinavir, nelfinavir, ritonavir and saquinavir. Use of protease inhibitors in tritherapy regimens permit more ambitious therapeutic strategies. Reverse transcriptase/ribonuclease H: RT can be inhibited either by nucleoside RT inhibitors (NRTIs) or by non nucleoside RT inhibitors (NNRTIs). NRTIs act as chain terminators, whereas NNRTIs inhibit DNA polymerization by binding a small hydrophobic pocket near the RT active site and inducing an allosteric change in this region. Classical NRTIs are abacavir, adefovir (PMEA), didanosine (ddI), lamivudine (3TC), stavudine (d4T), tenofovir (PMPA), zalcitabine (ddC), and zidovudine (AZT). Classical NNRTIs are atevirdine (BHAP U-87201E), delavirdine, efavirenz (DMP-266), emivirine (I-EBU), and nevirapine (BI-RG-587). The tritherapies used as a basic effective treatment of AIDS associate two NRTIs and one NNRTI. Functionally, mediates, with Gag polyprotein, the essential events in virion assembly, including binding the plasma membrane, making the protein-protein interactions necessary to create spherical particles, recruiting the viral Env proteins, and packaging the genomic RNA via direct interactions with the RNA packaging sequence (Psi). Gag-Pol polyprotein may regulate its own translation, by the binding genomic RNA in the 5'-UTR. At low concentration, the polyprotein would promote translation, whereas at high concentration, the polyprotein would encapsidate genomic RNA and then shut off translation. In terms of biological role, targets the polyprotein to the plasma membrane via a multipartite membrane-binding signal, that includes its myristoylated N-terminus. Matrix protein is part of the pre-integration complex. Implicated in the release from host cell mediated by Vpu. Binds to RNA. Forms the conical core that encapsulates the genomic RNA-nucleocapsid complex in the virion. Most core are conical, with only 7% tubular. The core is constituted by capsid protein hexamer subunits. The core is disassembled soon after virion entry. Host restriction factors such as TRIM5-alpha or TRIMCyp bind retroviral capsids and cause premature capsid disassembly, leading to blocks in reverse transcription. Capsid restriction by TRIM5 is one of the factors which restricts HIV-1 to the human species. Host PIN1 apparently facilitates the virion uncoating. On the other hand, interactions with PDZD8 or CYPA stabilize the capsid. Its function is as follows. Encapsulates and protects viral dimeric unspliced genomic RNA (gRNA). Binds these RNAs through its zinc fingers. Acts as a nucleic acid chaperone which is involved in rearangement of nucleic acid secondary structure during gRNA retrotranscription. Also facilitates template switch leading to recombination. As part of the polyprotein, participates in gRNA dimerization, packaging, tRNA incorporation and virion assembly. Functionally, aspartyl protease that mediates proteolytic cleavages of Gag and Gag-Pol polyproteins during or shortly after the release of the virion from the plasma membrane. Cleavages take place as an ordered, step-wise cascade to yield mature proteins. This process is called maturation. Displays maximal activity during the budding process just prior to particle release from the cell. Also cleaves Nef and Vif, probably concomitantly with viral structural proteins on maturation of virus particles. Hydrolyzes host EIF4GI and PABP1 in order to shut off the capped cellular mRNA translation. The resulting inhibition of cellular protein synthesis serves to ensure maximal viral gene expression and to evade host immune response. Also mediates cleavage of host YTHDF3. Mediates cleavage of host CARD8, thereby activating the CARD8 inflammasome, leading to the clearance of latent HIV-1 in patient CD4(+) T-cells after viral reactivation; in contrast, HIV-1 can evade CARD8-sensing when its protease remains inactive in infected cells prior to viral budding. In terms of biological role, multifunctional enzyme that converts the viral RNA genome into dsDNA in the cytoplasm, shortly after virus entry into the cell. This enzyme displays a DNA polymerase activity that can copy either DNA or RNA templates, and a ribonuclease H (RNase H) activity that cleaves the RNA strand of RNA-DNA heteroduplexes in a partially processive 3' to 5' endonucleasic mode. Conversion of viral genomic RNA into dsDNA requires many steps. A tRNA(3)-Lys binds to the primer-binding site (PBS) situated at the 5'-end of the viral RNA. RT uses the 3' end of the tRNA primer to perform a short round of RNA-dependent minus-strand DNA synthesis. The reading proceeds through the U5 region and ends after the repeated (R) region which is present at both ends of viral RNA. The portion of the RNA-DNA heteroduplex is digested by the RNase H, resulting in a ssDNA product attached to the tRNA primer. This ssDNA/tRNA hybridizes with the identical R region situated at the 3' end of viral RNA. This template exchange, known as minus-strand DNA strong stop transfer, can be either intra- or intermolecular. RT uses the 3' end of this newly synthesized short ssDNA to perform the RNA-dependent minus-strand DNA synthesis of the whole template. RNase H digests the RNA template except for two polypurine tracts (PPTs) situated at the 5'-end and near the center of the genome. It is not clear if both polymerase and RNase H activities are simultaneous. RNase H probably can proceed both in a polymerase-dependent (RNA cut into small fragments by the same RT performing DNA synthesis) and a polymerase-independent mode (cleavage of remaining RNA fragments by free RTs). Secondly, RT performs DNA-directed plus-strand DNA synthesis using the PPTs that have not been removed by RNase H as primers. PPTs and tRNA primers are then removed by RNase H. The 3' and 5' ssDNA PBS regions hybridize to form a circular dsDNA intermediate. Strand displacement synthesis by RT to the PBS and PPT ends produces a blunt ended, linear dsDNA copy of the viral genome that includes long terminal repeats (LTRs) at both ends. Catalyzes viral DNA integration into the host chromosome, by performing a series of DNA cutting and joining reactions. This enzyme activity takes place after virion entry into a cell and reverse transcription of the RNA genome in dsDNA. The first step in the integration process is 3' processing. This step requires a complex comprising the viral genome, matrix protein, Vpr and integrase. This complex is called the pre-integration complex (PIC). The integrase protein removes 2 nucleotides from each 3' end of the viral DNA, leaving recessed CA OH's at the 3' ends. In the second step, the PIC enters cell nucleus. This process is mediated through integrase and Vpr proteins, and allows the virus to infect a non dividing cell. This ability to enter the nucleus is specific of lentiviruses, other retroviruses cannot and rely on cell division to access cell chromosomes. In the third step, termed strand transfer, the integrase protein joins the previously processed 3' ends to the 5' ends of strands of target cellular DNA at the site of integration. The 5'-ends are produced by integrase-catalyzed staggered cuts, 5 bp apart. A Y-shaped, gapped, recombination intermediate results, with the 5'-ends of the viral DNA strands and the 3' ends of target DNA strands remaining unjoined, flanking a gap of 5 bp. The last step is viral DNA integration into host chromosome. This involves host DNA repair synthesis in which the 5 bp gaps between the unjoined strands are filled in and then ligated. Since this process occurs at both cuts flanking the HIV genome, a 5 bp duplication of host DNA is produced at the ends of HIV-1 integration. Alternatively, Integrase may catalyze the excision of viral DNA just after strand transfer, this is termed disintegration. This chain is Gag-Pol polyprotein (gag-pol), found in Homo sapiens (Human).